A 315-amino-acid chain; its full sequence is WD repeat domain-containing protein 83 (315 aa).

7 WD repeats span residues 23–62 (CQQGAVRAVRFNADGNYLLTCGSDKSLKLWSVSRGTLLKT), 65–104 (GHGYEVLDADGSYDNSQLCSCSSDKTVILWDVASGQVTRK), 107–146 (GHAGKVNCVQFNEEATVMLSGSIDGTVRCWDTRSRRMEPI), 151–188 (ESQDGISSLKVSEHELLTGSVDGRVRRYDLRMGQLQVD), 189–228 (YIGSPITCVCFSRDGQCTLSSSLDSTVRLLDKSTGEMLGE), 233–272 (VNKGYKLDCCLTDKDTHVLSCSEDGHVYYWDLVEGSLTLK), and 275–313 (VGKAVVQSLSFHPTEPRLLTSMEGRVQVWGAEPEDAAEN).

It belongs to the WD repeat MORG1 family.

The protein resides in the cytoplasm. Its function is as follows. Molecular scaffold protein for various multimeric protein complexes. Acts as a module in the assembly of a multicomponent scaffold for the ERK pathway, linking ERK responses to specific agonists. Also involved in response to hypoxia by acting as a negative regulator of HIF1A/HIF-1-alpha. This chain is WD repeat domain-containing protein 83 (wdr83), found in Danio rerio (Zebrafish).